The following is a 350-amino-acid chain: Probable galactose-1-phosphate uridylyltransferase (350 aa).

The disordered stretch occupies residues 31-52; that stretch reads PWSGQQEKAQKNELPEFDPTNP. Cys54 lines the Zn(2+) pocket. UDP-alpha-D-glucose is bound by residues 76–77 and Asn152; that span reads ND. His163 contacts Zn(2+). The active-site Tele-UMP-histidine intermediate is His165. Residues Gln167, 314–317, and 319–320 each bind UDP-alpha-D-glucose; these read KFMV and FE.

It belongs to the galactose-1-phosphate uridylyltransferase type 1 family. As to quaternary structure, homodimer. Requires Zn(2+) as cofactor.

It carries out the reaction alpha-D-galactose 1-phosphate + UDP-alpha-D-glucose = alpha-D-glucose 1-phosphate + UDP-alpha-D-galactose. The protein operates within carbohydrate metabolism; galactose metabolism. The protein is Probable galactose-1-phosphate uridylyltransferase (Galt) of Drosophila melanogaster (Fruit fly).